The chain runs to 660 residues: Arginine--tRNA ligase, cytoplasmic (660 aa).

Met1 is modified (N-acetylmethionine). The could be involved in the assembly of the multisynthetase complex stretch occupies residues 1-72 (MDALVAHCSA…QAERNKPTKT (72 aa)). Residues 200–202 (SPN), His211, Tyr384, Asp388, and Gln412 each bind L-arginine. A 'HIGH' region motif is present at residues 201 to 212 (PNIAKEMHVGHL). An interaction with tRNA region spans residues 529–543 (NTAAYLLYAFTRIRS).

The protein belongs to the class-I aminoacyl-tRNA synthetase family. As to quaternary structure, interacts (via N-terminus) with AIMP1 (via N-terminus); this stimulates its catalytic activity. Interacts (via N-terminus) with LARS2 (via C-terminus). Monomer. Part of a multisubunit complex that groups tRNA ligases for Arg (RARS1), Asp (DARS1), Gln (QARS1), Ile (IARS1), Leu (LARS1), Lys (KARS1), Met (MARS1) the bifunctional ligase for Glu and Pro (EPRS1) and the auxiliary subunits AIMP1/p43, AIMP2/p38 and EEF1E1/p18. Interacts with QARS1. Part of a complex composed of RARS1, QARS1 and AIMP1.

Its subcellular location is the cytoplasm. The protein resides in the cytosol. It carries out the reaction tRNA(Arg) + L-arginine + ATP = L-arginyl-tRNA(Arg) + AMP + diphosphate. In terms of biological role, forms part of a macromolecular complex that catalyzes the attachment of specific amino acids to cognate tRNAs during protein synthesis. Modulates the secretion of AIMP1 and may be involved in generation of the inflammatory cytokine EMAP2 from AIMP1. The polypeptide is Arginine--tRNA ligase, cytoplasmic (RARS1) (Bos taurus (Bovine)).